A 131-amino-acid polypeptide reads, in one-letter code: Small ribosomal subunit protein bS6 (131 aa).

Residue lysine 93 is modified to N6-acetyllysine. The segment at glutamate 98–glutamate 131 is disordered. Basic and acidic residues predominate over residues lysine 104–phenylalanine 116. A compositionally biased stretch (acidic residues) spans threonine 120–glutamate 131.

Belongs to the bacterial ribosomal protein bS6 family.

Its function is as follows. Binds together with bS18 to 16S ribosomal RNA. The protein is Small ribosomal subunit protein bS6 of Escherichia fergusonii (strain ATCC 35469 / DSM 13698 / CCUG 18766 / IAM 14443 / JCM 21226 / LMG 7866 / NBRC 102419 / NCTC 12128 / CDC 0568-73).